The sequence spans 238 residues: Leucine-rich repeat-containing protein 57 (238 aa).

LRR repeat units follow at residues 10 to 36, 37 to 62, 64 to 82, 83 to 106, 108 to 128, 129 to 152, 154 to 173, and 174 to 199; these read LETS…LQKL, TANL…SFQH, KSFT…DIGK, LKKL…IGQL, SLRT…GLGT, LRQL…VAEL, AIEI…EVSR, and TPRL…ILTD.

In Danio rerio (Zebrafish), this protein is Leucine-rich repeat-containing protein 57 (lrrc57).